A 352-amino-acid chain; its full sequence is Secretion system apparatus protein SsaU (352 aa).

Helical transmembrane passes span 34–54 (LIALYLYFHFFTEKMILILIE), 89–109 (LGAGVIVATVGSVFLQVGVVI), 144–164 (LKVIMLSLIFAFFFYYYASTF), and 176–196 (VLVVSSLIKWLWVGVMVFYIV).

This sequence belongs to the type III secretion exporter family.

The protein localises to the cell membrane. Functionally, part of a type III secretion system. This Salmonella typhimurium (strain LT2 / SGSC1412 / ATCC 700720) protein is Secretion system apparatus protein SsaU (ssaU).